A 562-amino-acid polypeptide reads, in one-letter code: Sensor histidine kinase MtrB (562 aa).

Helical transmembrane passes span 42–62 and 213–233; these read VVAL…FVLT and GTMA…ALLV. The 53-residue stretch at 235–287 folds into the HAMP domain; that stretch reads RQVVVPVRSASRIAERFAEGHLSERMPVRGEDDMARLAVSFNDMAESLSRQIT. The 218-residue stretch at 302-519 folds into the Histidine kinase domain; that stretch reads DVSHELRTPL…CFRLTLPLVR (218 aa). The interval 526-562 is disordered; that stretch reads SPLPMKPILQPSPQASTAGQQHGTQRQRLREHAERSR. Residues 536–551 show a composition bias toward polar residues; the sequence is PSPQASTAGQQHGTQR. The span at 553–562 shows a compositional bias: basic and acidic residues; that stretch reads RLREHAERSR.

It is found in the cell membrane. It catalyses the reaction ATP + protein L-histidine = ADP + protein N-phospho-L-histidine.. Its function is as follows. Member of the two-component regulatory system MtrA/MtrB. Seems to function as a membrane-associated protein kinase that phosphorylates MtrA in response to environmental signals. The chain is Sensor histidine kinase MtrB (mtrB) from Mycobacterium leprae (strain TN).